A 128-amino-acid chain; its full sequence is Glycine cleavage system H protein 2 (128 aa).

The Lipoyl-binding domain occupies 24-105 (TVTVGISDHA…PYSAWIFKVK (82 aa)). The residue at position 65 (Lys-65) is an N6-lipoyllysine.

Belongs to the GcvH family. The glycine cleavage system is composed of four proteins: P, T, L and H. Requires (R)-lipoate as cofactor.

Its function is as follows. The glycine cleavage system catalyzes the degradation of glycine. The H protein shuttles the methylamine group of glycine from the P protein to the T protein. This chain is Glycine cleavage system H protein 2, found in Pseudomonas syringae pv. tomato (strain ATCC BAA-871 / DC3000).